The chain runs to 408 residues: RNA-splicing ligase RtcB1 (408 aa).

Aspartate 75, cysteine 78, histidine 168, histidine 185, and histidine 281 together coordinate Mn(2+). 167–171 (NHFIE) provides a ligand contact to GMP. GMP contacts are provided by residues 281–282 (HN), 313–316 (PGSM), serine 320, 337–340 (HGAG), and lysine 407. Histidine 337 functions as the GMP-histidine intermediate in the catalytic mechanism.

Belongs to the RtcB family. As to quaternary structure, monomer. Requires Mn(2+) as cofactor.

It catalyses the reaction a 3'-end 3'-phospho-ribonucleotide-RNA + a 5'-end dephospho-ribonucleoside-RNA + GTP = a ribonucleotidyl-ribonucleotide-RNA + GMP + diphosphate. It carries out the reaction a 3'-end 2',3'-cyclophospho-ribonucleotide-RNA + a 5'-end dephospho-ribonucleoside-RNA + GTP + H2O = a ribonucleotidyl-ribonucleotide-RNA + GMP + diphosphate + H(+). Its function is as follows. GTP-dependent RNA ligase that is involved in RNA repair. Joins RNA with 2',3'-cyclic-phosphate or 3'-phosphate ends to RNA with 5'-hydroxy ends. GTP-dependent RNA ligase that is involved in tRNA repair. Repairs broken tRNA(Asp) and tRNA(Arg) that have been cleaved by colicin E5 or colicin D, respectively. Does not repair damaged 16S rRNA in 30S ribosomal subunits. The protein is RNA-splicing ligase RtcB1 of Escherichia coli (strain ATCC 25922 / DSM 1103 / LMG 8223 / NCIMB 12210 / NCTC 12241 / WDCM 00013 / Seattle 1946).